A 241-amino-acid chain; its full sequence is Proteasome subunit alpha type-5 (241 aa).

Belongs to the peptidase T1A family. The 26S proteasome consists of a 20S proteasome core and two 19S regulatory subunits. The 20S proteasome core is composed of 28 subunits that are arranged in four stacked rings, resulting in a barrel-shaped structure. The two end rings are each formed by seven alpha subunits, and the two central rings are each formed by seven beta subunits. The catalytic chamber with the active sites is on the inside of the barrel.

It localises to the cytoplasm. Its subcellular location is the nucleus. In terms of biological role, the proteasome is a multicatalytic proteinase complex which is characterized by its ability to cleave peptides with Arg, Phe, Tyr, Leu, and Glu adjacent to the leaving group at neutral or slightly basic pH. The proteasome has an ATP-dependent proteolytic activity. The sequence is that of Proteasome subunit alpha type-5 (psmA5) from Dictyostelium discoideum (Social amoeba).